The following is a 660-amino-acid chain: DNA mismatch repair protein MutL (660 aa).

Belongs to the DNA mismatch repair MutL/HexB family.

In terms of biological role, this protein is involved in the repair of mismatches in DNA. It is required for dam-dependent methyl-directed DNA mismatch repair. May act as a 'molecular matchmaker', a protein that promotes the formation of a stable complex between two or more DNA-binding proteins in an ATP-dependent manner without itself being part of a final effector complex. The sequence is that of DNA mismatch repair protein MutL from Streptococcus pyogenes serotype M1.